The chain runs to 127 residues: Fluoride-specific ion channel FluC (127 aa).

A run of 4 helical transmembrane segments spans residues 7–27 (LFLI…LTLL), 37–57 (FGTL…LAMF), 70–90 (FFVT…AEVI), and 102–122 (ITIT…GVFI). Na(+) is bound by residues glycine 77 and threonine 80.

It belongs to the fluoride channel Fluc/FEX (TC 1.A.43) family.

It is found in the cell inner membrane. The catalysed reaction is fluoride(in) = fluoride(out). Na(+) is not transported, but it plays an essential structural role and its presence is essential for fluoride channel function. Functionally, fluoride-specific ion channel. Important for reducing fluoride concentration in the cell, thus reducing its toxicity. This Histophilus somni (strain 129Pt) (Haemophilus somnus) protein is Fluoride-specific ion channel FluC.